The following is a 351-amino-acid chain: Phosphoribosylformylglycinamidine cyclo-ligase (351 aa).

This sequence belongs to the AIR synthase family.

It is found in the cytoplasm. The enzyme catalyses 2-formamido-N(1)-(5-O-phospho-beta-D-ribosyl)acetamidine + ATP = 5-amino-1-(5-phospho-beta-D-ribosyl)imidazole + ADP + phosphate + H(+). The protein operates within purine metabolism; IMP biosynthesis via de novo pathway; 5-amino-1-(5-phospho-D-ribosyl)imidazole from N(2)-formyl-N(1)-(5-phospho-D-ribosyl)glycinamide: step 2/2. The polypeptide is Phosphoribosylformylglycinamidine cyclo-ligase (Burkholderia cenocepacia (strain ATCC BAA-245 / DSM 16553 / LMG 16656 / NCTC 13227 / J2315 / CF5610) (Burkholderia cepacia (strain J2315))).